A 514-amino-acid chain; its full sequence is RNA-binding region-containing protein 3 (514 aa).

The interval 1-26 is disordered; the sequence is MAGPEPPMPLSRGGPGSASLSPPRGD. At Ser21 the chain carries Phosphoserine. Residues 27–102 form the RRM 1 domain; that stretch reads RTLLVRHLPA…HTLVVEFAKE (76 aa). 3 disordered regions span residues 106-133, 213-282, and 337-363; these read VHSP…EKKE, MPLH…VRKK, and ETQP…FGKI. Residue Ser108 is modified to Phosphoserine. A compositionally biased stretch (basic and acidic residues) spans 115 to 133; the sequence is TEKKKRLDDTVENDKEKKE. The segment covering 217–230 has biased composition (pro residues); sequence APLPPTSPQPPEEP. A Phosphoserine modification is found at Ser349. The region spanning 418 to 501 is the RRM 2 domain; the sequence is CRIYVKNLAR…KPMVVQFARS (84 aa).

In terms of assembly, component of the U11/U12 snRNPs that are part of the U12-type spliceosome. Found in a complex with m(7)G-capped U12 snRNA. Interacts with PDCD7.

Its subcellular location is the nucleus. Functionally, participates in pre-mRNA U12-dependent splicing, performed by the minor spliceosome which removes U12-type introns. U12-type introns comprises less than 1% of all non-coding sequences. Binds to the 3'-stem-loop of m(7)G-capped U12 snRNA. This is RNA-binding region-containing protein 3 (Rnpc3) from Mus musculus (Mouse).